We begin with the raw amino-acid sequence, 253 residues long: Tetraspanin-3 (253 aa).

Residues 1–11 (MGQCGITSSKT) lie on the Cytoplasmic side of the membrane. A helical membrane pass occupies residues 12-32 (VLVFLNLIFWGAAGILCYVGA). Residues 33 to 50 (YVFITYDDYDHFFEDVYT) are Extracellular-facing. The helical transmembrane segment at 51–71 (LFPAVVIIAVGALLFIIGLIG) threads the bilayer. Residues 72–85 (CCATIRESRCGLAT) lie on the Cytoplasmic side of the membrane. A helical transmembrane segment spans residues 86–106 (FVFILLLVFVTEVVVVVLGYV). Residues 107–212 (YRAKVENEVD…KKLQEILMHV (106 aa)) lie on the Extracellular side of the membrane. N-linked (GlcNAc...) asparagine glycans are attached at residues asparagine 127, asparagine 152, asparagine 167, and asparagine 183. The chain crosses the membrane as a helical span at residues 213–233 (IWAALAFAAIQLLGMLCACIV). Over 234–253 (LCRRSRDPAYELLITGGTYA) the chain is Cytoplasmic.

The protein belongs to the tetraspanin (TM4SF) family. In terms of assembly, interacts with claudin-11/CLDN11 and integrins.

It is found in the membrane. Regulates the proliferation and migration of oligodendrocytes, a process essential for normal myelination and repair. The chain is Tetraspanin-3 (Tspan3) from Mus musculus (Mouse).